Consider the following 119-residue polypeptide: Large ribosomal subunit protein bL19 (119 aa).

Belongs to the bacterial ribosomal protein bL19 family.

In terms of biological role, this protein is located at the 30S-50S ribosomal subunit interface and may play a role in the structure and function of the aminoacyl-tRNA binding site. This Pseudoalteromonas atlantica (strain T6c / ATCC BAA-1087) protein is Large ribosomal subunit protein bL19.